An 857-amino-acid polypeptide reads, in one-letter code: Cation/H(+) antiporter 25 (857 aa).

The next 11 membrane-spanning stretches (helical) occupy residues 65 to 85 (FSTFLIEAILIIFFIKIVYVL), 93 to 110 (RIVCEIIGGMMIGPSMLG), 122 to 142 (PIANYICANIGLMGFFYFFFL), 161 to 181 (YIAAVSVLVPIACVGSTGAAL), 194 to 214 (SIGGVTFALGFTSFPVIYTVL), 227 to 247 (FAMSVTLLGDMVGVYVLVLFE), 259 to 279 (YSVIWFLISAAIMAACLLLVV), 313 to 333 (FLTDMFGMAIAVGPIWLGLVV), 385 to 405 (IYMSIVGFVTKFVSSTGAALF), 413 to 435 (SLTLGLMMNLRGQIDILLYLHWI), and 447 to 467 (VMVLYAIVVTGVTAPLISFLY). Phosphoserine is present on S855.

It belongs to the monovalent cation:proton antiporter 2 (CPA2) transporter (TC 2.A.37) family. CHX (TC 2.A.37.4) subfamily. As to expression, specifically expressed in pollen.

The protein resides in the membrane. May operate as a cation/H(+) antiporter. The chain is Cation/H(+) antiporter 25 (CHX25) from Arabidopsis thaliana (Mouse-ear cress).